The primary structure comprises 1742 residues: Complement C4 (1742 aa).

Positions Met1–Gln19 are cleaved as a signal peptide. Asn60 carries an N-linked (GlcNAc...) asparagine glycan. Residues Cys68 and Cys97 are joined by a disulfide bond. N-linked (GlcNAc...) asparagine glycosylation is present at Asn226. A disulfide bridge links Cys634 with Cys668. Residues Arg675 to Arg678 constitute a propeptide that is removed on maturation. Cystine bridges form between Cys701–Cys727, Cys702–Cys734, and Cys715–Cys735. Residues Cys701–Cys735 enclose the Anaphylatoxin-like domain. The N-linked (GlcNAc...) asparagine glycan is linked to Asn861. A cross-link (isoglutamyl cysteine thioester (Cys-Gln)) is located at residues Cys1007–Gln1010. 2 N-linked (GlcNAc...) asparagine glycosylation sites follow: Asn1325 and Asn1388. Tyr1414, Tyr1418, and Tyr1420 each carry sulfotyrosine. Residues Arg1445 to Arg1451 constitute a propeptide that is removed on maturation. Cystine bridges form between Cys1469–Cys1533, Cys1581–Cys1586, Cys1593–Cys1671, Cys1616–Cys1740, and Cys1716–Cys1725. In terms of domain architecture, NTR spans Cys1593–Cys1740.

In terms of assembly, in absence of complement activation, circulates in blood as a disulfide-linked trimer of an alpha, beta and gamma chain. Complement C4b is composed of complement C4b-A, complement C4 beta and complement C4 gamma chains that are associated via disulfide bonds. Non-enzymatic component of the C3 convertase, also named C4bC2b, composed of the serine protease complement C2b (C2), as well as complement C4b. Non-enzymatic component of the C5 convertase, also named C4bC2bC3b, composed of the serine protease complement C2b (C2), complement C3b, as well as complement C4b. In terms of processing, prior to secretion, the single-chain precursor is enzymatically cleaved by plasminogen (PLG) to yield non-identical chains alpha, beta and gamma. During activation of the complement systems, the alpha chain is cleaved into C4a and C4b by different proteases depending on the complement pathway: C4b stays linked to the beta and gamma chains, while C4a is released in the plasma. The alpha chain is cleaved by C1S to generate C4a and C4b following activation by the classical complement system. The alpha chain is cleaved to generate C4a and C4b by MASP2 following activation by the lectin complement system. The alpha chain is cleaved by GZMK to generate C4a and C4b following activation by the GZMK complement system. Further degradation of C4b by C1 into the inactive fragments C4c and C4d blocks the generation of C3 convertase. The proteolytic cleavages often are incomplete so that many structural forms can be found in plasma. Upon activation, the internal thioester bond reacts with carbohydrate antigens on the target surface to form amide or ester bonds, leading to covalent association with the surface of pathogens. Post-translationally, complement C4b interacts with complement C3b via a thioester linkage. In terms of processing, N- and O-glycosylated. O-glycosylated with a core 1 or possibly core 8 glycan.

The protein resides in the secreted. Its subcellular location is the cell surface. Functionally, precursor of non-enzymatic components of the classical, lectin and GZMK complement pathways, which consist in a cascade of proteins that leads to phagocytosis and breakdown of pathogens and signaling that strengthens the adaptive immune system. In terms of biological role, non-enzymatic component of C3 and C5 convertases. Generated following cleavage by complement proteases (C1S, MASP2 or GZMK, depending on the complement pathway), it covalently attaches to the surface of pathogens, where it acts as an opsonin that marks the surface of antigens for removal. It then recruits the serine protease complement C2b to form the C3 and C5 convertases, which cleave and activate C3 and C5, respectively, the next components of the complement pathways. Complement C4b-A isotype is responsible for effective binding to form amide bonds with immune aggregates or protein antigens, while complement C4b-B isotype catalyzes the transacylation of the thioester carbonyl group to form ester bonds with carbohydrate antigens. Putative humoral mediator released following cleavage by complement proteases (C1S, MASP2 or GZMK, depending on the complement pathway). While it is strongly similar to anaphylatoxins, its role is unclear. Was reported to act as a mediator of local inflammatory process; however these effects were probably due to contamination with C3a and/C5a anaphylatoxins in biological assays. The chain is Complement C4 from Cavia porcellus (Guinea pig).